The chain runs to 628 residues: MTRIVWMIGGAQGLGVDTSANIFGNAVAKAGYYLFGNREYYSNIKGRHSYFEVVISEKPIRSLSSYVNILASFDAETVFQHFTETKEYLIYNVEYENTTVDLVKSMEPEMAEQVKEALSKERLGFTIKDVLEYLKRRGVKVIGFNYTELIKKIADTFKVPMSVVERAKNMIAVGASYGLLGLKFDYLKDAISSTFKNELFIKFNTMAAELGYNSVPNVYKLQEYKIEKQRIQVDGNTISAMGKLAGGLRFQSYYPITPASDESVYIEANQNLDMIVEGNELRKGGVVVVQAEDELAAINMAVGAALTGVRSATATSGPGFSLMSEGISWAGMNEVPVVITYYMRGAPATGLPTRSGQADLKFALNVGHGEFPRIVIASGDHVEIFWDAIWALNLAEKYQTPVIHIIEKTLANAYSVFEEELITNRPYVIERGKIVKPTSDYFNRFEVTEDGISPRVFLGQASIFYTGDEHNEEGHITENSINRMKMYEKRNKKLETADKEIPEEQRVNIVGDADIVLLTWGSPKGAILDAMEELSKDGIKTMMVQVKMFNPYPKNLMKKILSGKSKIIAVENNYNAQGAEVLAEKTGIFATNYILKWTGRPITREEVIEGIKKILERDEKRVVLYGGA.

A YPITP motif motif is present at residues 254-258; the sequence is YPITP. Thr257 and Arg344 together coordinate substrate.

Heterodimer composed of an alpha and a beta subunit.

The catalysed reaction is a 2-oxocarboxylate + 2 oxidized [2Fe-2S]-[ferredoxin] + CoA = an acyl-CoA + 2 reduced [2Fe-2S]-[ferredoxin] + CO2 + H(+). Functionally, catalyzes the coenzyme A-dependent oxidative decarboxylation of different 2-oxoacids such as 2-oxoglutarate, pyruvate and 2-oxobutyrate to form their CoA derivatives. The protein is 2-oxoacid:ferredoxin oxidoreductase 2, subunit alpha of Sulfurisphaera tokodaii (strain DSM 16993 / JCM 10545 / NBRC 100140 / 7) (Sulfolobus tokodaii).